The sequence spans 505 residues: ATP synthase subunit alpha (505 aa).

171–178 (GDRQTGKT) serves as a coordination point for ATP.

It belongs to the ATPase alpha/beta chains family. In terms of assembly, F-type ATPases have 2 components, CF(1) - the catalytic core - and CF(0) - the membrane proton channel. CF(1) has five subunits: alpha(3), beta(3), gamma(1), delta(1), epsilon(1). CF(0) has three main subunits: a(1), b(2) and c(9-12). The alpha and beta chains form an alternating ring which encloses part of the gamma chain. CF(1) is attached to CF(0) by a central stalk formed by the gamma and epsilon chains, while a peripheral stalk is formed by the delta and b chains.

It localises to the cell inner membrane. It carries out the reaction ATP + H2O + 4 H(+)(in) = ADP + phosphate + 5 H(+)(out). Produces ATP from ADP in the presence of a proton gradient across the membrane. The alpha chain is a regulatory subunit. This Nitratiruptor sp. (strain SB155-2) protein is ATP synthase subunit alpha.